A 410-amino-acid chain; its full sequence is Gamma-glutamyl phosphate reductase (410 aa).

Belongs to the gamma-glutamyl phosphate reductase family.

It is found in the cytoplasm. It catalyses the reaction L-glutamate 5-semialdehyde + phosphate + NADP(+) = L-glutamyl 5-phosphate + NADPH + H(+). It participates in amino-acid biosynthesis; L-proline biosynthesis; L-glutamate 5-semialdehyde from L-glutamate: step 2/2. In terms of biological role, catalyzes the NADPH-dependent reduction of L-glutamate 5-phosphate into L-glutamate 5-semialdehyde and phosphate. The product spontaneously undergoes cyclization to form 1-pyrroline-5-carboxylate. The polypeptide is Gamma-glutamyl phosphate reductase (Campylobacter jejuni subsp. jejuni serotype O:2 (strain ATCC 700819 / NCTC 11168)).